A 426-amino-acid polypeptide reads, in one-letter code: Tol-Pal system protein TolB (426 aa).

The first 25 residues, 1–25, serve as a signal peptide directing secretion; it reads MSITPSLSRRTVMSLLAAGLSPAFA.

Belongs to the TolB family. In terms of assembly, the Tol-Pal system is composed of five core proteins: the inner membrane proteins TolA, TolQ and TolR, the periplasmic protein TolB and the outer membrane protein Pal. They form a network linking the inner and outer membranes and the peptidoglycan layer.

The protein resides in the periplasm. Its function is as follows. Part of the Tol-Pal system, which plays a role in outer membrane invagination during cell division and is important for maintaining outer membrane integrity. The sequence is that of Tol-Pal system protein TolB from Polaromonas sp. (strain JS666 / ATCC BAA-500).